Reading from the N-terminus, the 185-residue chain is Large ribosomal subunit protein uL22 (185 aa).

The interval 157–185 (VAAPTPDEDAPKKKQSKKKMARQKLMQRD) is disordered. Positions 169-178 (KKQSKKKMAR) are enriched in basic residues.

The protein belongs to the universal ribosomal protein uL22 family.

This chain is Large ribosomal subunit protein uL22 (RpL17), found in Argas monolakensis (Mono lake bird tick).